A 118-amino-acid chain; its full sequence is Ribulose bisphosphate carboxylase small subunit (118 aa).

This sequence belongs to the RuBisCO small chain family. In terms of assembly, heterohexadecamer of 8 large and 8 small subunits.

It is found in the carboxysome. RuBisCO catalyzes two reactions: the carboxylation of D-ribulose 1,5-bisphosphate, the primary event in carbon dioxide fixation, as well as the oxidative fragmentation of the pentose substrate in the photorespiration process. Both reactions occur simultaneously and in competition at the same active site. Although the small subunit is not catalytic it is essential for maximal activity. In Thermosynechococcus vestitus (strain NIES-2133 / IAM M-273 / BP-1), this protein is Ribulose bisphosphate carboxylase small subunit.